The primary structure comprises 1493 residues: Inactive serine/threonine-protein kinase TEX14 (1493 aa).

3 ANK repeats span residues 27–54 (LHEY…AVNS), 55–84 (LGQT…DPNH), and 88–117 (DGST…DLRL). The 314-residue stretch at 198–511 (VISAQNIYSF…IMKNDLKDFI (314 aa)) folds into the Protein kinase domain. ATP-binding positions include 204-212 (IYSFGFGKF) and lysine 266. Serine 430 carries the phosphoserine; by PLK1 modification. Over residues 559–573 (GSQFHSPRGHSSPTG) the composition is skewed to polar residues. The interval 559-615 (GSQFHSPRGHSSPTGKATPEPPVPDVSPVAQQTHRQDAASPACSVAEEARNPSPDQT) is disordered. A phosphoserine mark is found at serine 560 and serine 660. Disordered regions lie at residues 782 to 904 (HDSP…RISM) and 940 to 1081 (AATG…LTPD). Residues 789 to 795 (GPPASSY) carry the GPPX3Y motif. The short motif at 846 to 854 (KASLERDRN) is the D-box element. Composition is skewed to polar residues over residues 855–904 (QNTS…RISM) and 1001–1020 (CGQT…QRFT). Positions 1026-1037 (PPREDEQPEHSE) are enriched in basic and acidic residues. Over residues 1053-1064 (YSGQSAQSTCSP) the composition is skewed to polar residues. A compositionally biased stretch (acidic residues) spans 1066–1075 (SSEDTEDMTD). A Phosphoserine modification is found at serine 1100. A disordered region spans residues 1115–1167 (RPQASGEEKFQMRKNLGKNSEILTKSQFQPIRSPEGEQDETLKEPPKEVKEKD). Residues 1131-1144 (GKNSEILTKSQFQP) show a composition bias toward polar residues. Basic and acidic residues predominate over residues 1154-1167 (ETLKEPPKEVKEKD). Serine 1262 bears the Phosphoserine mark. Disordered regions lie at residues 1288 to 1307 (GAGS…ATQR) and 1341 to 1466 (KGQQ…EEEE). Positions 1343-1362 (QQVSSTALDENTASRPGSTE) are enriched in polar residues. A compositionally biased stretch (basic and acidic residues) spans 1363 to 1380 (NDQRHLEEQETHSNKEDS). The residue at position 1400 (serine 1400) is a Phosphoserine. Basic and acidic residues predominate over residues 1426-1456 (PAREASSKDQEVGEKKRKGEESTKPEKRKPE). A Phosphoserine modification is found at serine 1492.

Belongs to the protein kinase superfamily. As to quaternary structure, interacts with KIF23 and RBM44. Interacts with CEP55; inhibiting interaction between CEP55 and PDCD6IP/ALIX and TSG101. Phosphorylated on Thr residues by CDK1 during early phases of mitosis, promoting the interaction with PLK1 and recruitment to kinetochores. Phosphorylated on Ser-430 by PLK1 during late prometaphase promotes the rapid depletion from kinetochores and its subsequent degradation by the APC/C complex.

It localises to the cytoplasm. Its subcellular location is the midbody. The protein resides in the chromosome. It is found in the centromere. The protein localises to the kinetochore. Required both for the formation of intercellular bridges during meiosis and for kinetochore-microtubule attachment during mitosis. Intercellular bridges are evolutionarily conserved structures that connect differentiating germ cells and are required for spermatogenesis and male fertility. Acts by promoting the conversion of midbodies into intercellular bridges via its interaction with CEP55: interaction with CEP55 inhibits the interaction between CEP55 and PDCD6IP/ALIX and TSG101, blocking cell abscission and leading to transform midbodies into intercellular bridges. Also plays a role during mitosis: recruited to kinetochores by PLK1 during early mitosis and regulates the maturation of the outer kinetochores and microtubule attachment. Has no protein kinase activity in vitro. This chain is Inactive serine/threonine-protein kinase TEX14 (TEX14), found in Bos taurus (Bovine).